Here is a 238-residue protein sequence, read N- to C-terminus: tRNA (guanine-N(7)-)-methyltransferase (238 aa).

S-adenosyl-L-methionine is bound by residues Glu68, Glu93, Asp120, and Asp143. Residue Asp143 is part of the active site. Substrate-binding positions include Lys147, Asp179, and 216–219 (TKFE).

The protein belongs to the class I-like SAM-binding methyltransferase superfamily. TrmB family.

The enzyme catalyses guanosine(46) in tRNA + S-adenosyl-L-methionine = N(7)-methylguanosine(46) in tRNA + S-adenosyl-L-homocysteine. It participates in tRNA modification; N(7)-methylguanine-tRNA biosynthesis. Catalyzes the formation of N(7)-methylguanine at position 46 (m7G46) in tRNA. The sequence is that of tRNA (guanine-N(7)-)-methyltransferase from Shewanella baltica (strain OS155 / ATCC BAA-1091).